A 306-amino-acid polypeptide reads, in one-letter code: Probable rRNA-processing protein EBP2 (306 aa).

At Met1 the chain carries N-acetylmethionine. Disordered regions lie at residues 1–20 (MDTP…LVTD) and 77–99 (VPEI…VDPE). Thr3 carries the post-translational modification Phosphothreonine. Residues Ser7, Ser9, Ser11, Ser13, and Ser16 each carry the phosphoserine modification. Residue Lys94 forms a Glycyl lysine isopeptide (Lys-Gly) (interchain with G-Cter in SUMO2) linkage. Residues 138–169 (AEMAKSDLQMQKIRQKLQTKQAAMERSEKAKQ) are a coiled coil. Glycyl lysine isopeptide (Lys-Gly) (interchain with G-Cter in SUMO2) cross-links involve residues Lys179 and Lys218. The segment at 213–306 (LEGDQKPLAQ…TREKMKNRTH (94 aa)) is disordered. A phosphoserine mark is found at Ser264 and Ser270. Residues 274-306 (KTAHGRGLKRPGKKGSNKRPGKRTREKMKNRTH) show a composition bias toward basic residues.

It belongs to the EBP2 family. Specifically interacts with EBV EBNA1. The EBNA1-EBP2 interaction is important for the stable segregation of EBV episomes during cell division. Interacts with WDR46. In terms of tissue distribution, ubiquitous.

It is found in the nucleus. The protein localises to the nucleolus. Functionally, required for the processing of the 27S pre-rRNA. In Homo sapiens (Human), this protein is Probable rRNA-processing protein EBP2 (EBNA1BP2).